A 404-amino-acid polypeptide reads, in one-letter code: MQDILTVILAGGMGSRLSPLTDDRAKPAVPFGGKYRIIDFTLTNCLHSGLRKILVLTQYKSHSLQKHLRDGWSIFNPELGEYITSVPPQMRKGGKWYEGTADAIYHNLWLLERSEAKYVMVLSGDHIYRMDYAPMLEEHIANNAALTVACMDVNCKEAKAFGVMGIDERHRVHSFVEKPQNPPHLPNDPERSLVSMGIYIFSMEVLQQALIEDADDDASSHDFGKDIIPKLIDTGSVFAYKFCGSKGRVDKDCYWRDVGTIDSFYQANMDLLEPIPPMNLYQKDWGIRTYEPQYPPARTVSSGSGNEGIFINSIIANGVINSGGSVQHSIVSSNVRINDSATVVDSIIFDDVEIGEGCQLVNCIIDKHVKVPPYTQIGLNRLEDAQRFKISENGIVVVPESYQF.

Residues tyrosine 97, glycine 162, 177–178 (EK), and serine 195 contribute to the alpha-D-glucose 1-phosphate site.

It belongs to the bacterial/plant glucose-1-phosphate adenylyltransferase family. Homotetramer.

The catalysed reaction is alpha-D-glucose 1-phosphate + ATP + H(+) = ADP-alpha-D-glucose + diphosphate. The protein operates within glycan biosynthesis; glycogen biosynthesis. Its function is as follows. Involved in the biosynthesis of ADP-glucose, a building block required for the elongation reactions to produce glycogen. Catalyzes the reaction between ATP and alpha-D-glucose 1-phosphate (G1P) to produce pyrophosphate and ADP-Glc. This Vibrio vulnificus (strain CMCP6) protein is Glucose-1-phosphate adenylyltransferase 2.